The following is a 704-amino-acid chain: Fibulin-1 (704 aa).

A signal peptide spans 1–25 (MDKLRGARPLRLLLLLLALLPALRG). Intrachain disulfides connect C33-C59, C34-C66, C47-C67, C76-C107, C89-C108, C110-C134, C111-C141, C124-C142, C181-C191, C187-C200, C202-C215, C221-C234, C228-C243, C249-C261, C267-C280, C274-C289, C295-C307, C313-C326, C320-C335, C342-C355, C361-C374, C368-C383, C385-C398, C404-C416, C412-C425, C427-C440, C446-C455, C451-C464, C466-C480, C486-C499, C495-C508, C510-C524, C530-C543, C537-C552, and C557-C578. 3 Anaphylatoxin-like domains span residues 33–74 (CCDK…LEEH), 75–109 (YCSD…KCCY), and 110–142 (CCLL…RACC). N96 carries N-linked (GlcNAc...) asparagine glycosylation. An EGF-like 1 domain is found at 177 to 216 (LHDGCRGGGPCSQQCRDTGSSYVCSCFVGYQLQPDGVNCE). An EGF-like 2; calcium-binding domain is found at 217-262 (DINECITGTHSCGIGQTCVNTLGSFRCQRDTSCGTGYELTDDSRCK). The EGF-like 3; calcium-binding domain maps to 263–308 (DIDECETGTHNCPPDFICQNTPGSFRCRPKLQCMNGFIQDALGNCI). The region spanning 309–356 (DINECLSTNMPCPAGQICINTDGSYTCQRISPSCGRGYHLNEDGTRCV) is the EGF-like 4; calcium-binding domain. Residues 357–399 (DVDECSSSDQPCGEGHVCINGPGNYRCECKSGYSFDVISRTCI) enclose the EGF-like 5; calcium-binding domain. The segment at 357 to 441 (DVDECSSSDQ…KLSSDGRSCE (85 aa)) is self-association and FN1-binding. Residues 400–441 (DINECRRYPGRLCAHKCENTPGSYYCTCTMGFKLSSDGRSCE) form the EGF-like 6; calcium-binding domain. Positions 442–481 (DLNECESSPCSQECANVYGSYQCYCRRGFQLSDIDGISCE) constitute an EGF-like 7; calcium-binding domain. The EGF-like 8; calcium-binding domain maps to 482-525 (DIDECALPTGGHICSFRCINIPGSFQCTCPSTGYRLAPNARNCQ). The EGF-like 9; calcium-binding domain occupies 526–579 (DIDECVAETHNCSFNETCFNIQGGFRCLSLECPENYRKSGDTVRLEKTDTIRCI). N-linked (GlcNAc...) asparagine glycans are attached at residues N536 and N540.

This sequence belongs to the fibulin family. As to quaternary structure, homomultimerizes and interacts with various extracellular matrix components.

The protein localises to the secreted. The protein resides in the extracellular space. It localises to the extracellular matrix. Its function is as follows. Incorporated into fibronectin-containing matrix fibers. May play a role in cell adhesion and migration along protein fibers within the extracellular matrix (ECM). Could be important for certain developmental processes and contribute to the supramolecular organization of ECM architecture, in particular to those of basement membranes. The protein is Fibulin-1 (FBLN1) of Gallus gallus (Chicken).